Consider the following 530-residue polypeptide: Ataxin-10 homolog (530 aa).

It belongs to the ataxin-10 family.

It is found in the cytoplasm. Its function is as follows. May play a role in the regulation of cytokinesis. This is Ataxin-10 homolog (CTR86) from Candida glabrata (strain ATCC 2001 / BCRC 20586 / JCM 3761 / NBRC 0622 / NRRL Y-65 / CBS 138) (Yeast).